The chain runs to 645 residues: MILCRGLFMAVIGIDLGTTNSCVAVMEGGDAKAIENSEGARTTPSIVAFTDSEVLVGDPAKRQATTNAKNTIYASKRLIGRRYQDTRDIKTSYDIVSAKNGDAWIKVRDKDYSPSQIGALILEKMKETAERHLGCKVEKAVITVPAYFDDAQRQATKDAGRIAGLDVIRIINEPTAAALAYGLNKSDKQKVIAVYDLGGGTFDVSILEIADGVFEVKSTNGDTMLGGEDFDHAIMEYLMDDFKKSTGIDLHSDAMAMQRIKEAAEKAKIELSSRMETDINLPFLSSDSTGPKHLSLKLTRATFENLVSDLVKRTIEPCKKALKDAGISADKIDEVVLVGGMTRVPKIIQTVKEFFGKEPHKGVNPDEVVAIGAAIQGGILAGDVRDVLLLDVTPLSLGIETLGGVFTPLIERNTTIPTKKSQVFSTAEDGQTAVTIKVFQGERKMANDNKLLGQFSLEGIPPAPRGMPQIEVTFDIDANGIVHVSAKDKASGKEQAIRIQSSGGLTDDEIQNMIKEAESKAEEDEKRKKFVEVKNNAENLVHSTEKSLKEHGDKISNADKLDIENAIRDLKDCISKDNIEDTDTMQNKLDHLMKVSMKLGEALYSNTNNATAGDNNTTDTGSSSNSDGSKVVDSDYQEIDKKDGK.

Thr201 is modified (phosphothreonine; by autocatalysis). Residues Asn606–Ser629 show a composition bias toward low complexity. A disordered region spans residues Asn606 to Lys645. The span at Lys630–Lys645 shows a compositional bias: basic and acidic residues.

This sequence belongs to the heat shock protein 70 family.

Acts as a chaperone. The sequence is that of Chaperone protein DnaK from Ehrlichia ruminantium (strain Welgevonden).